A 162-amino-acid polypeptide reads, in one-letter code: SsrA-binding protein (162 aa).

The protein belongs to the SmpB family.

It localises to the cytoplasm. In terms of biological role, required for rescue of stalled ribosomes mediated by trans-translation. Binds to transfer-messenger RNA (tmRNA), required for stable association of tmRNA with ribosomes. tmRNA and SmpB together mimic tRNA shape, replacing the anticodon stem-loop with SmpB. tmRNA is encoded by the ssrA gene; the 2 termini fold to resemble tRNA(Ala) and it encodes a 'tag peptide', a short internal open reading frame. During trans-translation Ala-aminoacylated tmRNA acts like a tRNA, entering the A-site of stalled ribosomes, displacing the stalled mRNA. The ribosome then switches to translate the ORF on the tmRNA; the nascent peptide is terminated with the 'tag peptide' encoded by the tmRNA and targeted for degradation. The ribosome is freed to recommence translation, which seems to be the essential function of trans-translation. This Shewanella frigidimarina (strain NCIMB 400) protein is SsrA-binding protein.